The sequence spans 1616 residues: Myosin-IIIa (1616 aa).

The Protein kinase domain maps to 21–287 (WEITETIGKG…VSELLQHKFI (267 aa)). ATP-binding positions include 27–35 (IGKGTYGKV) and K50. D150 functions as the Proton acceptor in the catalytic mechanism. Residues 338–1053 (KDVDDLATLE…HVEQLNLMRK (716 aa)) form the Myosin motor domain. Positions 934–956 (LMDLLSKMVVGQPHFVRCIKPNS) are actin-binding. IQ domains lie at 1055 to 1084 (AIDKLILIQACVRAFLCSRRYQKIQEKRKE), 1082 to 1111 (RKESAIIIQSAARGHLVRKQRKEIVDMKNT), and 1346 to 1375 (EDKAAVFIQSKYRGYKRRQQLRKDKMSSFK). The interaction with MORN4 stretch occupies residues 1401-1479 (EEINNIKKKD…RRVSSQQCLS (79 aa)). Disordered stretches follow at residues 1545 to 1567 (LPSRSGPKEHSPSLRERRPQQEL) and 1581 to 1616 (AESPEKEEEREPAANPYDFRRLLRKTSQRRRLVQQS). Basic and acidic residues-rich tracts occupy residues 1550–1564 (GPKEHSPSLRERRPQ) and 1583–1592 (SPEKEEEREP). Residues 1602 to 1616 (LLRKTSQRRRLVQQS) are compositionally biased toward basic residues.

In the C-terminal section; belongs to the TRAFAC class myosin-kinesin ATPase superfamily. Myosin family. The protein in the N-terminal section; belongs to the protein kinase superfamily. STE Ser/Thr protein kinase family. In terms of assembly, interacts with MORN4. Interacts (via C-terminus) with ESPN and ESPNL. As to expression, strongest expression in retina, retinal pigment epithelial cells, cochlea and pancreas.

The protein localises to the cytoplasm. Its subcellular location is the cytoskeleton. It localises to the cell projection. The protein resides in the filopodium tip. It is found in the stereocilium. It carries out the reaction L-seryl-[protein] + ATP = O-phospho-L-seryl-[protein] + ADP + H(+). The enzyme catalyses L-threonyl-[protein] + ATP = O-phospho-L-threonyl-[protein] + ADP + H(+). It catalyses the reaction ATP + H2O = ADP + phosphate + H(+). Its function is as follows. Actin-dependent motor protein with a protein kinase activity, playing an essential role in hearing. Probably also plays a role in vision. Required for normal cochlear hair bundle development and hearing. Plays an important role in the early steps of cochlear hair bundle morphogenesis. Influences the number and lengths of stereocilia to be produced and limits the growth of microvilli within the forming auditory hair bundles thereby contributing to the architecture of the hair bundle, including its staircase pattern. Involved in the elongation of actin in stereocilia tips by transporting the actin regulatory factor ESPN to the plus ends of actin filaments. The chain is Myosin-IIIa (MYO3A) from Homo sapiens (Human).